We begin with the raw amino-acid sequence, 237 residues long: Exosome complex component Rrp4 (237 aa).

Residues 72–144 form the S1 motif domain; the sequence is GHIVVGKVVD…LSKDPVLTIK (73 aa). The KH domain maps to 152 to 211; the sequence is PRGTLVEIPPQKVPRVIGRRGSMVSMIEDLLGVKLIVGQNGRIVVVGDDPQRVEIAVLAV.

Belongs to the RRP4 family. Component of the archaeal exosome complex. Forms a trimer of Rrp4 and/or Csl4 subunits. The trimer associates with a hexameric ring-like arrangement composed of 3 Rrp41-Rrp42 heterodimers.

The protein localises to the cytoplasm. Functionally, non-catalytic component of the exosome, which is a complex involved in RNA degradation. Increases the RNA binding and the efficiency of RNA degradation. Confers strong poly(A) specificity to the exosome. This Thermofilum pendens (strain DSM 2475 / Hrk 5) protein is Exosome complex component Rrp4.